Consider the following 465-residue polypeptide: Cysteine--tRNA ligase (465 aa).

Residue Cys-27 coordinates Zn(2+). The 'HIGH' region motif lies at 29–39; the sequence is PTVYDDAHLGH. Positions 207, 237, and 241 each coordinate Zn(2+). A 'KMSKS' region motif is present at residues 269-273; that stretch reads KMSKS. ATP is bound at residue Lys-272.

The protein belongs to the class-I aminoacyl-tRNA synthetase family. Monomer. Zn(2+) serves as cofactor.

It localises to the cytoplasm. It carries out the reaction tRNA(Cys) + L-cysteine + ATP = L-cysteinyl-tRNA(Cys) + AMP + diphosphate. The protein is Cysteine--tRNA ligase of Helicobacter pylori (strain HPAG1).